Here is a 313-residue protein sequence, read N- to C-terminus: UDP-N-acetylglucosamine 3-dehydrogenase (313 aa).

NAD(+)-binding residues include H13, L14, and R38.

The protein belongs to the Gfo/Idh/MocA family. As to quaternary structure, exists in multiple oligomeric states.

The enzyme catalyses UDP-N-acetyl-alpha-D-glucosamine + NAD(+) = UDP-2-acetamido-3-dehydro-2-deoxy-alpha-D-glucopyranose + NADH + H(+). It functions in the pathway bacterial outer membrane biogenesis; LPS lipid A biosynthesis. Its function is as follows. Oxidoreductase involved in the synthesis of 2,3-diamino-2,3-dideoxy-D-glucopyranose (GlcN3N), which is a component of lipid A in some species. Catalyzes the NAD(+)-dependent oxidation of the glucosamine 3-position of UDP-N-acetyl-glucosamine (UDP-GlcNAc) to a ketone moiety, forming UDP-2-acetamido-3-dehydro-2-deoxy-alpha-D-glucopyranose (UDP-3-oxo-GlcNAc). Is specific for UDP-GlcNAc, no activity is observed with UDP-glucose (UDP-Glc), UDP-glucoronic acid (UDP-GlcA), UDP-galactose (UDP-Gal) and UDP-N-acetylgalactosamine (UDP-GalNAc). Cannot use FAD(+) and NADP(+). The sequence is that of UDP-N-acetylglucosamine 3-dehydrogenase from Acidithiobacillus ferrooxidans (strain ATCC 23270 / DSM 14882 / CIP 104768 / NCIMB 8455) (Ferrobacillus ferrooxidans (strain ATCC 23270)).